Here is a 298-residue protein sequence, read N- to C-terminus: tRNA pseudouridine synthase B (298 aa).

D42 (nucleophile) is an active-site residue.

It belongs to the pseudouridine synthase TruB family. Type 1 subfamily.

The enzyme catalyses uridine(55) in tRNA = pseudouridine(55) in tRNA. Functionally, responsible for synthesis of pseudouridine from uracil-55 in the psi GC loop of transfer RNAs. The polypeptide is tRNA pseudouridine synthase B (Mycobacterium tuberculosis (strain CDC 1551 / Oshkosh)).